We begin with the raw amino-acid sequence, 229 residues long: Ras-like protein rasV (229 aa).

40–47 (GDGGVGKT) provides a ligand contact to GTP. An Effector region motif is present at residues 62–70 (YDPTIEDSY). GTP is bound by residues 87–91 (DTAGQ) and 146–149 (NKSD). C226 carries the cysteine methyl ester modification. C226 is lipidated: S-geranylgeranyl cysteine. Positions 227 to 229 (KVM) are cleaved as a propeptide — removed in mature form.

It belongs to the small GTPase superfamily. Ras family.

The protein resides in the cell membrane. It catalyses the reaction GTP + H2O = GDP + phosphate + H(+). Ras proteins bind GDP/GTP and possess intrinsic GTPase activity. This chain is Ras-like protein rasV (rasV), found in Dictyostelium discoideum (Social amoeba).